The chain runs to 258 residues: Tryptophan synthase alpha chain (258 aa).

Catalysis depends on proton acceptor residues Glu-47 and Asp-58.

The protein belongs to the TrpA family. Tetramer of two alpha and two beta chains.

It catalyses the reaction (1S,2R)-1-C-(indol-3-yl)glycerol 3-phosphate + L-serine = D-glyceraldehyde 3-phosphate + L-tryptophan + H2O. Its pathway is amino-acid biosynthesis; L-tryptophan biosynthesis; L-tryptophan from chorismate: step 5/5. In terms of biological role, the alpha subunit is responsible for the aldol cleavage of indoleglycerol phosphate to indole and glyceraldehyde 3-phosphate. This Bacillus cereus (strain B4264) protein is Tryptophan synthase alpha chain.